The primary structure comprises 210 residues: Thymidylate kinase (210 aa).

Position 10–17 (10–17) interacts with ATP; that stretch reads GPEGAGKS.

Belongs to the thymidylate kinase family.

The catalysed reaction is dTMP + ATP = dTDP + ADP. Its function is as follows. Phosphorylation of dTMP to form dTDP in both de novo and salvage pathways of dTTP synthesis. The sequence is that of Thymidylate kinase from Ectopseudomonas mendocina (strain ymp) (Pseudomonas mendocina).